Here is a 263-residue protein sequence, read N- to C-terminus: 4-hydroxy-2-oxo-heptane-1,7-dioate aldolase (263 aa).

H45 (proton acceptor) is an active-site residue. Q147 provides a ligand contact to substrate. E149 contributes to the a divalent metal cation binding site. Residues A174 and D175 each coordinate substrate. Position 175 (D175) interacts with a divalent metal cation.

The protein belongs to the HpcH/HpaI aldolase family. In terms of assembly, homohexamer; trimer of dimers. A divalent metal cation is required as a cofactor.

The catalysed reaction is 4-hydroxy-2-oxoheptanedioate = succinate semialdehyde + pyruvate. Its pathway is aromatic compound metabolism; 4-hydroxyphenylacetate degradation; pyruvate and succinate semialdehyde from 4-hydroxyphenylacetate: step 7/7. Catalyzes the reversible retro-aldol cleavage of 4-hydroxy-2-ketoheptane-1,7-dioate (HKHD) to pyruvate and succinic semialdehyde. The polypeptide is 4-hydroxy-2-oxo-heptane-1,7-dioate aldolase (Salmonella heidelberg (strain SL476)).